We begin with the raw amino-acid sequence, 478 residues long: tRNA (guanine-N(7)-)-methyltransferase non-catalytic subunit TRM82 (478 aa).

WD repeat units lie at residues 14 to 53 (SSADGAAWTLFGASGSKIVVQSSNGVASVWSRQAVQVLDP), 73 to 113 (EQKF…GLQQ), 217 to 258 (GHVS…HIIE), and 263 to 301 (GHEEFVSRLCVTRSGLLVSGGGDAHLLVWDWRNFLLNEK).

Belongs to the WD repeat TRM82 family. Forms a heterodimer with the catalytic subunit TRM8.

The protein localises to the nucleus. Its pathway is tRNA modification; N(7)-methylguanine-tRNA biosynthesis. Required for the formation of N(7)-methylguanine at position 46 (m7G46) in tRNA. In the complex, it is required to stabilize and induce conformational changes of the catalytic subunit. This is tRNA (guanine-N(7)-)-methyltransferase non-catalytic subunit TRM82 from Phaeosphaeria nodorum (strain SN15 / ATCC MYA-4574 / FGSC 10173) (Glume blotch fungus).